A 446-amino-acid polypeptide reads, in one-letter code: Maltoporin (446 aa).

The first 25 residues, 1-25 (MMITLRKLPLAVAVAAGVMSAQAMA), serve as a signal peptide directing secretion.

This sequence belongs to the porin LamB (TC 1.B.3) family. In terms of assembly, homotrimer formed of three 18-stranded antiparallel beta-barrels, containing three independent channels.

Its subcellular location is the cell outer membrane. The enzyme catalyses beta-maltose(in) = beta-maltose(out). Involved in the transport of maltose and maltodextrins. The polypeptide is Maltoporin (Escherichia coli (strain SE11)).